Here is a 517-residue protein sequence, read N- to C-terminus: Bifunctional purine biosynthesis protein PurH (517 aa).

Positions 1–146 (MGRLVLLSVS…KNFAHLTVLC (146 aa)) constitute an MGS-like domain.

This sequence belongs to the PurH family.

It carries out the reaction (6R)-10-formyltetrahydrofolate + 5-amino-1-(5-phospho-beta-D-ribosyl)imidazole-4-carboxamide = 5-formamido-1-(5-phospho-D-ribosyl)imidazole-4-carboxamide + (6S)-5,6,7,8-tetrahydrofolate. It catalyses the reaction IMP + H2O = 5-formamido-1-(5-phospho-D-ribosyl)imidazole-4-carboxamide. It participates in purine metabolism; IMP biosynthesis via de novo pathway; 5-formamido-1-(5-phospho-D-ribosyl)imidazole-4-carboxamide from 5-amino-1-(5-phospho-D-ribosyl)imidazole-4-carboxamide (10-formyl THF route): step 1/1. It functions in the pathway purine metabolism; IMP biosynthesis via de novo pathway; IMP from 5-formamido-1-(5-phospho-D-ribosyl)imidazole-4-carboxamide: step 1/1. The protein is Bifunctional purine biosynthesis protein PurH of Gloeothece citriformis (strain PCC 7424) (Cyanothece sp. (strain PCC 7424)).